A 123-amino-acid polypeptide reads, in one-letter code: uncharacterized protein (123 aa).

An N-terminal signal peptide occupies residues 1–25 (MKHGIKALLITLSLACAGMSHSALA). The segment covering 40–53 (EAPAAQSKAAVPAK) has biased composition (low complexity). The interval 40–62 (EAPAAQSKAAVPAKASDEEGTRV) is disordered. HhH domains follow at residues 60 to 90 (TRVSINNASAEELARAMNGVGLKKAQAIVSY) and 91 to 120 (REEYGPFKTVEDLKQVPGMGNSLVERNLAV).

This is an uncharacterized protein from Escherichia coli (strain K12).